The following is a 157-amino-acid chain: Protein Smg homolog (157 aa).

This sequence belongs to the Smg family.

This Tolumonas auensis (strain DSM 9187 / NBRC 110442 / TA 4) protein is Protein Smg homolog.